The following is a 476-amino-acid chain: Protein PAL OF QUIRKY (476 aa).

The N-terminal stretch at 1–14 (MTTVSSAFATVAEG) is a signal peptide. The tract at residues 204–256 (TRRTNSGTSGSGDGNGGICGQESMMLETNSSFGSTSSSVSSSNLPPIKSSGED) is disordered. Residues 212-222 (SGSGDGNGGIC) show a composition bias toward gly residues. Positions 233 to 252 (SSFGSTSSSVSSSNLPPIKS) are enriched in low complexity.

As to quaternary structure, homodimer. Interacts with QKY and SUB/SCM at the plasma membrane. In terms of tissue distribution, observed in seedlings, roots, shoots, leaves, stems, inflorescence and flowers.

The protein localises to the cell membrane. It localises to the endomembrane system. Its function is as follows. Collaboratively with SUB and QKY, regulates cell growth anisotropy during gynoecium development, thus linking together cell-cell communication and cellular growth. The protein is Protein PAL OF QUIRKY of Arabidopsis thaliana (Mouse-ear cress).